Here is a 234-residue protein sequence, read N- to C-terminus: Protein rgg8 (234 aa).

It localises to the cytoplasm. Its subcellular location is the nucleus. This is Protein rgg8 (rgg8) from Schizosaccharomyces pombe (strain 972 / ATCC 24843) (Fission yeast).